We begin with the raw amino-acid sequence, 104 residues long: Co-chaperonin GroES 2 (104 aa).

It belongs to the GroES chaperonin family. As to quaternary structure, heptamer of 7 subunits arranged in a ring. Interacts with the chaperonin GroEL.

It localises to the cytoplasm. Functionally, together with the chaperonin GroEL, plays an essential role in assisting protein folding. The GroEL-GroES system forms a nano-cage that allows encapsulation of the non-native substrate proteins and provides a physical environment optimized to promote and accelerate protein folding. GroES binds to the apical surface of the GroEL ring, thereby capping the opening of the GroEL channel. The protein is Co-chaperonin GroES 2 of Bradyrhizobium diazoefficiens (strain JCM 10833 / BCRC 13528 / IAM 13628 / NBRC 14792 / USDA 110).